A 189-amino-acid polypeptide reads, in one-letter code: UPF0301 protein RT0098 (189 aa).

Belongs to the UPF0301 (AlgH) family.

This is UPF0301 protein RT0098 from Rickettsia typhi (strain ATCC VR-144 / Wilmington).